A 307-amino-acid polypeptide reads, in one-letter code: Thiamine-monophosphate kinase (307 aa).

4 residues coordinate Mg(2+): D26, T37, T38, and D39. H46 lines the substrate pocket. Mg(2+) is bound by residues D68 and D117. ATP-binding positions include 116-117 (GD) and R140. Residue D207 participates in Mg(2+) binding. ATP is bound at residue T209. Residue D210 participates in Mg(2+) binding. Residues E254 and F304 each coordinate substrate.

Belongs to the thiamine-monophosphate kinase family.

It carries out the reaction thiamine phosphate + ATP = thiamine diphosphate + ADP. It participates in cofactor biosynthesis; thiamine diphosphate biosynthesis; thiamine diphosphate from thiamine phosphate: step 1/1. Catalyzes the ATP-dependent phosphorylation of thiamine-monophosphate (TMP) to form thiamine-pyrophosphate (TPP), the active form of vitamin B1. The polypeptide is Thiamine-monophosphate kinase (Leptospira interrogans serogroup Icterohaemorrhagiae serovar Lai (strain 56601)).